Reading from the N-terminus, the 1070-residue chain is Duffy receptor (1070 aa).

An N-terminal signal peptide occupies residues 1-20 (MKGKNRSLFVLLVLLLLHKV). Residues 21–1007 (NNVLLERTIE…CFTKGGFKDK (987 aa)) are Extracellular-facing. The disordered stretch occupies residues 116–146 (YMEGKDGGDKTGEEKDGEHKTDSKTDNGKGA). The segment covering 118-142 (EGKDGGDKTGEEKDGEHKTDSKTDN) has biased composition (basic and acidic residues). Residue Asn-183 is glycosylated (N-linked (GlcNAc...) asparagine). Residues 211–521 (NTVMKNCNYK…AKKNTQEVVT (311 aa)) are pvRII region; mediates ACKR1 binding. Disulfide bonds link Cys-217–Cys-246 and Cys-230–Cys-237. N-linked (GlcNAc...) asparagine glycosylation is found at Asn-255, Asn-351, and Asn-420. 4 disulfide bridges follow: Cys-300/Cys-377, Cys-415/Cys-432, Cys-427/Cys-507, and Cys-436/Cys-505. 3 stretches are compositionally biased toward polar residues: residues 525-542 (NAAK…QPVD), 554-569 (THGN…TTGK), and 629-642 (GASN…TVEA). The disordered stretch occupies residues 525–906 (NAAKSQATNS…HLNSNNNLSN (382 aa)). The span at 697-711 (ETGKGQDNDMAKATK) shows a compositional bias: basic and acidic residues. Positions 712–728 (DSSNSSDGTSSATGDTT) are enriched in low complexity. The N-linked (GlcNAc...) asparagine glycan is linked to Asn-715. The span at 730–748 (AVDREINKGVPEDRDKTVG) shows a compositional bias: basic and acidic residues. N-linked (GlcNAc...) asparagine glycosylation occurs at Asn-787. A compositionally biased stretch (low complexity) spans 808-817 (LSKTESLEST). Asn-825 is a glycosylation site (N-linked (GlcNAc...) asparagine). Basic and acidic residues-rich tracts occupy residues 835 to 849 (NGGK…DFKS) and 865 to 889 (AEGH…KDTF). The segment covering 895–906 (SHHLNSNNNLSN) has biased composition (low complexity). Asn-903 and Asn-938 each carry an N-linked (GlcNAc...) asparagine glycan. A helical membrane pass occupies residues 1008–1025 (TYFAAAGALLILLLLIAS). Residues 1026–1070 (RKMIKNDSEEATFNEFEEYCDNIHRIPLMPNNIEHMQPSTPLDYS) lie on the Cytoplasmic side of the membrane.

Homodimer; dimerization (via PvRII region) is promoted by the interaction with human ACKR1. Interacts (via PvRII region) with human ACKR1 (via N-terminal extracellular domain).

Its subcellular location is the membrane. Binds to the human erythrocyte Duffy blood group determinant (ACKR1). The sequence is that of Duffy receptor (PVDR) from Plasmodium vivax (strain Salvador I).